A 198-amino-acid chain; its full sequence is Outer-membrane lipoprotein carrier protein (198 aa).

A signal peptide spans 1–17 (MKKILLSLCFLSSVAFA).

This sequence belongs to the LolA family. In terms of assembly, monomer.

It localises to the periplasm. Functionally, participates in the translocation of lipoproteins from the inner membrane to the outer membrane. Only forms a complex with a lipoprotein if the residue after the N-terminal Cys is not an aspartate (The Asp acts as a targeting signal to indicate that the lipoprotein should stay in the inner membrane). This chain is Outer-membrane lipoprotein carrier protein, found in Aliivibrio salmonicida (strain LFI1238) (Vibrio salmonicida (strain LFI1238)).